A 156-amino-acid polypeptide reads, in one-letter code: MVDTPYRKMLAAKIHRATVTGADVNYEGSLTVPPELLVAAKIHPYESLHVWNVTRGTRLETYAIEGLPNSNDVCANGAAAHLIRPGDHVILAAYAMVPEADAATHKPRLIFVDDNNQLSHVGPEIAGPNLRSDSDDTHLVRSTEMTPDGQPLAEGC.

The active-site Schiff-base intermediate with substrate; via pyruvic acid is Ser29. Ser29 is subject to Pyruvic acid (Ser). Residue Thr61 coordinates substrate. The active-site Proton donor is Tyr62. Residue 77 to 79 (GAA) coordinates substrate.

Belongs to the PanD family. In terms of assembly, heterooctamer of four alpha and four beta subunits. Requires pyruvate as cofactor. In terms of processing, is synthesized initially as an inactive proenzyme, which is activated by self-cleavage at a specific serine bond to produce a beta-subunit with a hydroxyl group at its C-terminus and an alpha-subunit with a pyruvoyl group at its N-terminus.

It is found in the cytoplasm. It carries out the reaction L-aspartate + H(+) = beta-alanine + CO2. It participates in cofactor biosynthesis; (R)-pantothenate biosynthesis; beta-alanine from L-aspartate: step 1/1. Catalyzes the pyruvoyl-dependent decarboxylation of aspartate to produce beta-alanine. The chain is Aspartate 1-decarboxylase from Rhodopirellula baltica (strain DSM 10527 / NCIMB 13988 / SH1).